The primary structure comprises 249 residues: Indole-3-glycerol phosphate synthase (249 aa).

This sequence belongs to the TrpC family.

It carries out the reaction 1-(2-carboxyphenylamino)-1-deoxy-D-ribulose 5-phosphate + H(+) = (1S,2R)-1-C-(indol-3-yl)glycerol 3-phosphate + CO2 + H2O. It participates in amino-acid biosynthesis; L-tryptophan biosynthesis; L-tryptophan from chorismate: step 4/5. In Pyrobaculum aerophilum (strain ATCC 51768 / DSM 7523 / JCM 9630 / CIP 104966 / NBRC 100827 / IM2), this protein is Indole-3-glycerol phosphate synthase.